We begin with the raw amino-acid sequence, 114 residues long: NADH-ubiquinone oxidoreductase chain 3 (114 aa).

3 consecutive transmembrane segments (helical) span residues 4 to 24 (LVYIVFTIVLTVGLILVSYLL), 55 to 75 (FYLIAILFIIFDLEVVFILPF), and 82 to 102 (VSLLGGWITIIFLVILTIGFI).

The protein belongs to the complex I subunit 3 family.

Its subcellular location is the mitochondrion membrane. The catalysed reaction is a ubiquinone + NADH + 5 H(+)(in) = a ubiquinol + NAD(+) + 4 H(+)(out). Its function is as follows. Core subunit of the mitochondrial membrane respiratory chain NADH dehydrogenase (Complex I) that is believed to belong to the minimal assembly required for catalysis. Complex I functions in the transfer of electrons from NADH to the respiratory chain. The immediate electron acceptor for the enzyme is believed to be ubiquinone. This Allomyces macrogynus protein is NADH-ubiquinone oxidoreductase chain 3 (ND3).